The primary structure comprises 115 residues: Pro-neuregulin-4, membrane-bound isoform (115 aa).

At 1–62 (MPTDHEEPCG…SSIQTKSNLF (62 aa)) the chain is on the extracellular side. The EGF-like domain occupies 5–46 (HEEPCGPSHKSFCLNGGLCYVIPTIPSPFCRCVENYTGARCE). 3 cysteine pairs are disulfide-bonded: Cys9-Cys23, Cys17-Cys34, and Cys36-Cys45. Asn39 carries N-linked (GlcNAc...) asparagine glycosylation. Residues 63–83 (EAFVALAVLVTLIIGAFYFLC) form a helical membrane-spanning segment. The Cytoplasmic segment spans residues 84-115 (RKGHFQRASSVQYDINLVETSSTSAHHSHEQH).

Belongs to the neuregulin family. Interacts with ERBB4. Proteolytic cleavage close to the plasma membrane on the external face leads to the release of the soluble growth factor form. Post-translationally, extensive glycosylation precedes the proteolytic cleavage.

The protein resides in the cell membrane. The protein localises to the secreted. Functionally, low affinity ligand for the ERBB4 tyrosine kinase receptor. Concomitantly recruits ERBB1 and ERBB2 coreceptors, resulting in ligand-stimulated tyrosine phosphorylation and activation of the ERBB receptors. Does not bind to the ERBB1, ERBB2 and ERBB3 receptors. This is Pro-neuregulin-4, membrane-bound isoform (NRG4) from Homo sapiens (Human).